A 156-amino-acid chain; its full sequence is Arginine repressor (156 aa).

It belongs to the ArgR family.

The protein localises to the cytoplasm. It participates in amino-acid biosynthesis; L-arginine biosynthesis [regulation]. Functionally, regulates arginine biosynthesis genes. The sequence is that of Arginine repressor from Shewanella putrefaciens (strain CN-32 / ATCC BAA-453).